A 99-amino-acid chain; its full sequence is uncharacterized protein (99 aa).

A run of 3 helical transmembrane segments spans residues Phe-7–Tyr-29, Phe-39–Asn-61, and Phe-68–Leu-90.

It localises to the cell membrane. This is an uncharacterized protein from Archaeoglobus fulgidus (strain ATCC 49558 / DSM 4304 / JCM 9628 / NBRC 100126 / VC-16).